Reading from the N-terminus, the 105-residue chain is Malonate decarboxylase acyl carrier protein (105 aa).

An O-(phosphoribosyl dephospho-coenzyme A)serine modification is found at Ser28.

This sequence belongs to the MdcC family. Covalently binds the prosthetic group of malonate decarboxylase.

Its subcellular location is the cytoplasm. Subunit of malonate decarboxylase, it is an acyl carrier protein to which acetyl and malonyl thioester residues are bound via a 2'-(5''-phosphoribosyl)-3'-dephospho-CoA prosthetic group and turn over during the catalytic mechanism. The chain is Malonate decarboxylase acyl carrier protein from Xanthomonas campestris pv. campestris (strain 8004).